Reading from the N-terminus, the 1253-residue chain is Structural polyprotein (1253 aa).

The interval 37–71 (FQAQQMQQLISAVNALTMRQNAIAPARPPKPKKKK) is host transcription inhibition. Residues 58–109 (AIAPARPPKPKKKKTTKPKPKTQPKKINGKTQQQKKKDKQADKKKKKPGKRE) are disordered. The Nuclear localization signal signature appears at 64 to 105 (PPKPKKKKTTKPKPKTQPKKINGKTQQQKKKDKQADKKKKKP). The segment covering 65-107 (PKPKKKKTTKPKPKTQPKKINGKTQQQKKKDKQADKKKKKPGK) has biased composition (basic residues). Positions 87–120 (KTQQQKKKDKQADKKKKKPGKRERMCMKIENDCI) are binding to the viral RNA. A ribosome-binding region spans residues 105–119 (PGKRERMCMKIENDC). A disulfide bridge connects residues Cys119 and Cys134. A Peptidase S3 domain is found at 119–267 (CIFEVKHEGK…RVTPEGSEEW (149 aa)). His145 (charge relay system) is an active-site residue. The Nuclear export signal motif lies at 150-160 (IDNADLAKLAF). Residues 161–166 (KKSSKY) are interaction with spike glycoprotein E2. Asp167 serves as the catalytic Charge relay system. The dimerization of the capsid protein stretch occupies residues 189–199 (PEGHYNWHHGA). Catalysis depends on Ser219, which acts as the Charge relay system. Positions 225-229 (DNKGR) are dimerization of the capsid protein. The Extracellular segment spans residues 268–701 (SAPLITAMCV…YGLYPAATVS (434 aa)). Intrachain disulfides connect Cys276/Cys285, Cys290/Cys294, and Cys293/Cys325. N-linked (GlcNAc...) asparagine; by host glycosylation is present at Asn280. Asn327 carries an N-linked (GlcNAc...) asparagine; by host glycan. 6 disulfide bridges follow: Cys352–Cys458, Cys355–Cys361, Cys424–Cys438, Cys486–Cys598, Cys534–Cys558, and Cys536–Cys553. A glycan (N-linked (GlcNAc...) asparagine; by host) is linked at Asn533. The N-linked (GlcNAc...) asparagine; by host glycan is linked to Asn595. A helical transmembrane segment spans residues 702–722 (AVVGMSLLALISIFASCYMLV). Cys718 is lipidated: S-stearoyl cysteine; by host. Residues 723–727 (AARSK) are interaction with the capsid protein. Residues 723–755 (AARSKCLTPYALTPGAAVPWTLGILCCAPRAHA) are Cytoplasmic-facing. The S-stearoyl cysteine; by host moiety is linked to residue Cys728. Residues 728–748 (CLTPYALTPGAAVPWTLGILC) form a transient transmembrane before p62-6K protein processing region. A disulfide bond links Cys728 and Cys749. Residues Cys748 and Cys749 are each lipidated (S-palmitoyl cysteine; by host). The Extracellular portion of the chain corresponds to 756–770 (ASVAETMAYLWDQNQ). The helical transmembrane segment at 771-791 (ALFWLEFAAPVACILIITYCL) threads the bilayer. Arg792 is a topological domain (cytoplasmic). The helical transmembrane segment at 793–813 (NVLCCCKSLSFLVLLSLGATA) threads the bilayer. The Extracellular segment spans residues 814–1230 (RAYEHSTVMP…ALSWVQKISG (417 aa)). Intrachain disulfides connect Cys864–Cys929, Cys877–Cys909, Cys878–Cys911, and Cys883–Cys893. The E1 fusion peptide loop stretch occupies residues 899–916 (VYPFMWGGAYCFCDSENT). Residues Asn956 and Asn1085 are each glycosylated (N-linked (GlcNAc...) asparagine; by host). 4 disulfide bridges follow: Cys1074–Cys1086, Cys1116–Cys1191, Cys1121–Cys1195, and Cys1143–Cys1185. Residues 1112–1192 (IDLTCTVATC…SLCSARATCS (81 aa)) are E1-DIII; interaction with host receptor VLDLR. The helical transmembrane segment at 1231–1251 (GLGAFAIGAILVLVVVTCIGL) threads the bilayer. Cys1248 carries S-stearoyl cysteine; by host lipidation. The Cytoplasmic segment spans residues 1252 to 1253 (RR).

As to quaternary structure, homodimer. Homomultimer. Interacts with host karyopherin KPNA4; this interaction allows the nuclear import of the viral capsid protein. Interacts with spike glycoprotein E2. Interacts with host IRAK1; the interaction leads to inhibition of IRAK1-dependent signaling. In terms of assembly, the precursor of protein E3/E2 and E1 form a heterodimer shortly after synthesis. The precursor of protein E3/E2 and E1 form a heterodimer shortly after synthesis. Processing of the precursor of protein E3/E2 into E2 and E3 results in a heterodimer of the spike glycoproteins E2 and E1. Spike at virion surface are constituted of a trimer of E2-E1 heterodimers. E2-E1 heterodimers interact with host VLDLR or LRP8/APOER2 to mediate viral entry. After target cell attachment and endocytosis, E1 change conformation to form homotrimers. Interacts with 6K protein. Interacts (via E1-DIII) with host VLDLR (via class A repeats); this interaction mediates viral entry into host cell. As to quaternary structure, interacts with spike glycoprotein E1. Processing of the precursor of protein E3/E2 into E2 and E3 results in a heterodimer of the spike glycoproteins E2 and E1. Spike at virion surface are constituted of a trimer of E2-E1 heterodimers. E2-E1 heterodimers interact with host VLDLR or LRP8/APOER2 to mediate viral entry. Interacts with 6K protein. In terms of assembly, oligomer. Interacts with spike glycoprotein E1. Interacts with spike glycoprotein E2. Post-translationally, specific enzymatic cleavages in vivo yield mature proteins. Capsid protein is auto-cleaved during polyprotein translation, unmasking a signal peptide at the N-terminus of the precursor of E3/E2. The remaining polyprotein is then targeted to the host endoplasmic reticulum, where host signal peptidase cleaves it into pE2, 6K and E1 proteins. pE2 is further processed to mature E3 and E2 by host furin in trans-Golgi vesicle. Protein processing process takes about 30 minutes at physiologic temperatures. The folding of the p62/6K/E1 precursor requires the formation of intrachain disulfide bonds and has been shown to involve a transient covalent interaction between the nascent and newly synthesized heterodimer and the host-cell chaperones, P4HB/PDI and PDIA3/ERp57. The folding pathway also includes non covalent interaction with human CANX/calnexin and CALR/calreticulin. Palmitoylated via thioester bonds. These palmitoylations may induce disruption of the C-terminus transmembrane. This would result in the reorientation of E2 C-terminus from lumenal to cytoplasmic side. In terms of processing, envelope E1, E2 and E3 proteins are N-glycosylated. Post-translationally, stearoylated. Palmitoylated via thioester bonds with about four covalently bound fatty acids per molecule.

The protein resides in the virion. Its subcellular location is the host cytoplasm. The protein localises to the host cell membrane. It localises to the host nucleus. It is found in the virion membrane. The protein resides in the host Golgi apparatus. Its subcellular location is the host trans-Golgi network. The protein localises to the host endoplasmic reticulum. The enzyme catalyses Autocatalytic release of the core protein from the N-terminus of the togavirus structural polyprotein by hydrolysis of a -Trp-|-Ser- bond.. In terms of biological role, forms an icosahedral capsid with a T=4 symmetry composed of 240 copies of the capsid protein surrounded by a lipid membrane through which penetrate 80 spikes composed of trimers of E1-E2 heterodimers. The capsid protein binds to the viral RNA genome at a site adjacent to a ribosome binding site for viral genome translation following genome release. Possesses a protease activity that results in its autocatalytic cleavage from the nascent structural protein. Following its self-cleavage, the capsid protein transiently associates with ribosomes, and within several minutes the protein binds to viral RNA and rapidly assembles into icosahedric core particles. The resulting nucleocapsid eventually associates with the cytoplasmic domain of the spike glycoprotein E2 at the cell membrane, leading to budding and formation of mature virions. In case of infection, new virions attach to target cells and after clathrin-mediated endocytosis their membrane fuses with the host endosomal membrane. This leads to the release of the nucleocapsid into the cytoplasm, followed by an uncoating event necessary for the genomic RNA to become accessible. The uncoating might be triggered by the interaction of capsid proteins with ribosomes. Binding of ribosomes would release the genomic RNA since the same region is genomic RNA-binding and ribosome-binding. Specifically inhibits interleukin-1 receptor-associated kinase 1/IRAK1-dependent signaling during viral entry, representing a means by which the alphaviruses may evade innate immune detection and activation prior to viral gene expression. Its function is as follows. Provides the signal sequence for the translocation of the precursor of protein E3/E2 to the host endoplasmic reticulum. Furin-cleaved E3 remains associated with spike glycoprotein E1 and mediates pH protection of the latter during the transport via the secretory pathway. After virion release from the host cell, the assembly protein E3 is gradually released in the extracellular space. Plays a role in viral attachment to target host cell, by binding to the cell receptors VLDLR or LRP8/APOER2. The host LDLR can act as a cell receptor for viral entry. Synthesized as a p62 precursor which is processed by furin at the cell membrane just before virion budding, giving rise to E2-E1 heterodimer. The p62-E1 heterodimer is stable, whereas E2-E1 is unstable and dissociate at low pH. p62 is processed at the last step, presumably to avoid E1 fusion activation before its final export to cell surface. E2 C-terminus contains a transitory transmembrane that would be disrupted by palmitoylation, resulting in reorientation of the C-terminal tail from lumenal to cytoplasmic side. This step is critical since E2 C-terminus is involved in budding by interacting with capsid proteins. This release of E2 C-terminus in cytoplasm occurs lately in protein export, and precludes premature assembly of particles at the endoplasmic reticulum membrane. Functionally, acts as a viroporin that participates in virus glycoprotein processing and transport to the plasma membrane, cell permeabilization and budding of viral particles. Disrupts the calcium homeostasis of the cell, probably at the endoplasmic reticulum level. This leads to cytoplasmic calcium elevation. Because of its lipophilic properties, the 6K protein is postulated to influence the selection of lipids that interact with the transmembrane domains of the glycoproteins, which, in turn, affects the deformability of the bilayer required for the extreme curvature that occurs as budding proceeds. Present in low amount in virions, about 3% compared to viral glycoproteins. In terms of biological role, class II viral fusion protein. Fusion activity is inactive as long as E1 is bound to E2 in mature virion. After virus attachment to target cell via host VLDLR or LRP8/APOER2 and endocytosis, acidification of the endosome induces dissociation of E1/E2 heterodimer and concomitant trimerization of the E1 subunits. This E1 trimer is fusion active, and promotes release of viral nucleocapsid in cytoplasm after endosome and viral membrane fusion. Efficient fusion requires the presence of cholesterol and sphingolipid in the target membrane. Fusion is optimal at levels of about 1 molecule of cholesterol per 2 molecules of phospholipids, and is specific for sterols containing a 3-beta-hydroxyl group. The chain is Structural polyprotein from Aedes (Middle-African hedgehog).